The chain runs to 428 residues: D-amino acid dehydrogenase (428 aa).

3–17 (VVILGSGVVGVASAY) contacts FAD.

Belongs to the DadA oxidoreductase family. FAD serves as cofactor.

It carries out the reaction a D-alpha-amino acid + A + H2O = a 2-oxocarboxylate + AH2 + NH4(+). The protein operates within amino-acid degradation; D-alanine degradation; NH(3) and pyruvate from D-alanine: step 1/1. Its function is as follows. Oxidative deamination of D-amino acids. This is D-amino acid dehydrogenase from Burkholderia pseudomallei (strain 1106a).